The primary structure comprises 63 residues: Large ribosomal subunit protein uL29 (63 aa).

It belongs to the universal ribosomal protein uL29 family.

In Actinobacillus pleuropneumoniae serotype 5b (strain L20), this protein is Large ribosomal subunit protein uL29.